The chain runs to 344 residues: Protein YRO2 (344 aa).

The Extracellular portion of the chain corresponds to 1-34; it reads MSDYVELLKRGGNEAIKINPPTGADFHITSRGSD. Residues 35 to 55 traverse the membrane as a helical segment; it reads WLFTVFCVNLLFGVILVPLMF. Topologically, residues 56–62 are cytoplasmic; the sequence is RKPVKDR. Residues 63 to 83 form a helical membrane-spanning segment; that stretch reads FVYYTAIAPNLFMSIAYFTMA. The Extracellular portion of the chain corresponds to 84 to 119; that stretch reads SNLGWIPVRAKYNHVQTSTQKEHPGYRQIFYARYVG. Residues 120 to 140 form a helical membrane-spanning segment; the sequence is WFLAFPWPIIQMSLLGGTPLW. A topological domain (cytoplasmic) is located at residue glutamine 141. A helical transmembrane segment spans residues 142 to 162; sequence IAFNVGMTEIFTVCWLIAACV. Topologically, residues 163 to 172 are extracellular; the sequence is HSTYKWGYYT. The chain crosses the membrane as a helical span at residues 173 to 193; that stretch reads IGIGAAIVVCISLMTTTFNLV. The Cytoplasmic portion of the chain corresponds to 194-202; it reads KARGKDVSN. Residues 203–223 form a helical membrane-spanning segment; the sequence is VFITFMSVIMFLWLIAYPTCF. Residues 224-238 lie on the Extracellular side of the membrane; that stretch reads GITDGGNVLQPDSAT. Residues 239–259 traverse the membrane as a helical segment; that stretch reads IFYGIIDLLILSILPVLFMPL. The Cytoplasmic portion of the chain corresponds to 260 to 344; sequence ANYLGIERLG…EEEDVATDSE (85 aa). Residues 282–344 are disordered; it reads PVAEKKMPSP…EEEDVATDSE (63 aa). A Glycyl lysine isopeptide (Lys-Gly) (interchain with G-Cter in ubiquitin) cross-link involves residue lysine 286. Serine 293 carries the phosphoserine modification. Over residues 297 to 306 the composition is skewed to basic and acidic residues; sequence SDSDSSIKEK. Residues 307–330 show a composition bias toward basic residues; that stretch reads LKLKKKHKKDKKKAKKAKKAKKAK. Residues 334 to 344 are compositionally biased toward acidic residues; sequence EEEEDVATDSE. At threonine 341 the chain carries Phosphothreonine. Serine 343 bears the Phosphoserine mark.

This sequence belongs to the archaeal/bacterial/fungal opsin family.

The protein localises to the membrane. The chain is Protein YRO2 (YRO2) from Saccharomyces cerevisiae (strain ATCC 204508 / S288c) (Baker's yeast).